The chain runs to 485 residues: Glutamyl-tRNA(Gln) amidotransferase subunit A (485 aa).

Active-site charge relay system residues include Lys78 and Ser153. Catalysis depends on Ser177, which acts as the Acyl-ester intermediate.

It belongs to the amidase family. GatA subfamily. In terms of assembly, heterotrimer of A, B and C subunits.

It catalyses the reaction L-glutamyl-tRNA(Gln) + L-glutamine + ATP + H2O = L-glutaminyl-tRNA(Gln) + L-glutamate + ADP + phosphate + H(+). Functionally, allows the formation of correctly charged Gln-tRNA(Gln) through the transamidation of misacylated Glu-tRNA(Gln) in organisms which lack glutaminyl-tRNA synthetase. The reaction takes place in the presence of glutamine and ATP through an activated gamma-phospho-Glu-tRNA(Gln). This Bacillus cereus (strain 03BB102) protein is Glutamyl-tRNA(Gln) amidotransferase subunit A.